The chain runs to 150 residues: Arginine repressor (150 aa).

Belongs to the ArgR family.

Its subcellular location is the cytoplasm. It participates in amino-acid biosynthesis; L-arginine biosynthesis [regulation]. In terms of biological role, regulates arginine biosynthesis genes. The polypeptide is Arginine repressor (Staphylococcus aureus (strain Mu3 / ATCC 700698)).